Reading from the N-terminus, the 73-residue chain is Protein SlyX homolog (73 aa).

Belongs to the SlyX family.

The sequence is that of Protein SlyX homolog from Pasteurella multocida (strain Pm70).